The primary structure comprises 271 residues: Protein FANTASTIC FOUR 1 (271 aa).

Residues 114–168 (NSFPPPLNSVNGFNNSRMVKSYKEDGRLVVQAIRVCSPPRCFVSERREGRLRLCL) enclose the FAF domain. The interval 174 to 255 (NSQDAEEEFE…KRRCNENGCE (82 aa)) is disordered. The segment covering 177–224 (DAEEEFEEEDEDDQYDAEEEEEEEEEEEEEEEEEEEEEEEEEEEDEEG) has biased composition (acidic residues). Residues 237-247 (GNKKVSNRPKR) are compositionally biased toward basic residues.

It belongs to the fantastic four family. In terms of tissue distribution, expressed in the shoot apex, stamens, anthers and young siliques. Detected in provascular and vascular tissue.

In terms of biological role, able to repress WUS when constitutively overexpressed, but have no effect on CLV3. This chain is Protein FANTASTIC FOUR 1 (FAF1), found in Arabidopsis thaliana (Mouse-ear cress).